The following is an 809-amino-acid chain: Trimethylamine-N-oxide reductase 2 (809 aa).

A signal peptide (tat-type signal) is located at residues 1–31; the sequence is MTLTRREFIKHSGIAAGALVVTSAAPLPAWA. Ser176 contributes to the Mo-bis(molybdopterin guanine dinucleotide) binding site.

The protein belongs to the prokaryotic molybdopterin-containing oxidoreductase family. The cofactor is Mo-bis(molybdopterin guanine dinucleotide). In terms of processing, predicted to be exported by the Tat system. The position of the signal peptide cleavage has not been experimentally proven.

It is found in the periplasm. The catalysed reaction is trimethylamine + 2 Fe(III)-[cytochrome c] + H2O = trimethylamine N-oxide + 2 Fe(II)-[cytochrome c] + 3 H(+). In terms of biological role, reduces trimethylamine-N-oxide (TMAO) into trimethylamine; an anaerobic reaction coupled to energy-yielding reactions. Can also reduce other N- and S-oxide compounds such as 4-methylmorpholine-N-oxide and biotin sulfoxide (BSO), but with a lower catalytic efficiency. The chain is Trimethylamine-N-oxide reductase 2 (torZ) from Escherichia coli O157:H7.